The primary structure comprises 491 residues: MDGVSTAILLLLLAVISLSLTFSSRGKGQLPPGPKPLPILGNLLQLRSQDLLTSLTKLSKEYGSVFTVYLGSRPVIVLSGYQTVKEALVDKGEEFSGRGAYPVFFNFTRGNGIAFSDGERWKILRRFSVQILRNFGMGKRSIEERILEEGSFLLEVLRKMEGKPFDPVFILSRSVSNIICSVVFGSRFDYDDERLLTIIHFINDNFKIMSSPWGEMYNIFPSVLDWIPGPHKRLFRNFGGMKDLIARSVREHQDSLDPNSPRDFIDCFLTKMAQEKQDPLSHFNMDTLLMTTHNLLFGGTETVGTTLRHAFLILMKYPKVQARVQEEIDRVVGRSRMPTLEDRTSMPYTDAVIHEVQRFADVIPMNLPHRVTRDTPFRGFLIPKGTDVITLLNTVHYDSDQFKTPQEFNPEHFLDDNHSFKKSPAFMPFSAGRRLCLGEPLARMELFIYFTSILQNFTLQPLVDPEDIDLTPLSSGLGNLPRPFQLCMHIR.

Cysteine 436 lines the heme pocket.

Belongs to the cytochrome P450 family. The cofactor is heme. Club cells in lung and liver.

It is found in the endoplasmic reticulum membrane. It localises to the microsome membrane. Involved in the regio- and stereoselective transformation of naphthalene to trans-1R-hydroxy-2R-glutathionyl-1,2-dihydronaphthalene in the presence of glutathione and glutathione S-transferases. It specifically catalyzes the production of a very reactive and potentially toxic intermediate, the 2R,2S arene oxide, that is associated with necrosis of the unciliated bronchiolar epithelial cells or club cells in lung. The polypeptide is Cytochrome P450 2F2 (Cyp2f2) (Mus musculus (Mouse)).